Here is a 553-residue protein sequence, read N- to C-terminus: MSDIALTVSILALVAVVGLFIGNVKFRGIGLGIGGVLFGGIIVGHFVSQAGMTLSSDMLHVIQEFGLILFVYTIGIQVGPGFFASLRVSGLRLNLFAVLIVIIGGLVTAILHKLFDIPLPVVLGIFSGAVTNTPALGAGQQILRDLGTPMEMVDQMGMSYAMAYPFGICGILFTMWMLRVIFRVNVETEAQQHESSRTNAGALIKTINIRVENPNRHDLAIKDVPILNGDKIICSRLKREETLKVPSPDTIIQLGDLLHLVGQPADLHNAQLVIGQEVDTSLSTKGTDLRVERVVVTNENVLGKRIRDLHFKERYDVVISRLNRAGVELVASGDISLQFGDILNLVGRPSAIDAVANVLGNAQQKLQQVQMLPVFIGIGLGVLLGSIPVFVPGFPAALKLGLAGGPLIMALILGRIGSIGKLYWFMPPSANLALRELGIVLFLSIVGLKSGGDFVNTLVNGEGLSWIGYGALITAVPLITVGILARMLAKMNYLTMCGMLAGSMTDPPALAFANNLHPTSGAAALSYATVYPLVMFLRIITPQLLAVLFWSIG.

A run of 5 helical transmembrane segments spans residues 4 to 24, 28 to 48, 65 to 85, 95 to 115, and 158 to 178; these read IALT…IGNV, GIGL…HFVS, FGLI…FFAS, LFAV…HKLF, and MSYA…MWML. RCK C-terminal domains follow at residues 191 to 276 and 279 to 361; these read QQHE…VIGQ and DTSL…VLGN. The next 6 helical transmembrane spans lie at 371 to 391, 393 to 413, 439 to 459, 464 to 484, 493 to 513, and 533 to 553; these read MLPV…PVFV, GFPA…ALIL, IVLF…NTLV, LSWI…VGIL, YLTM…LAFA, and LVMF…WSIG.

Belongs to the AAE transporter (TC 2.A.81) family. YidE subfamily.

The protein resides in the cell membrane. In Shigella flexneri serotype 5b (strain 8401), this protein is Putative transport protein YidE.